Reading from the N-terminus, the 345-residue chain is Aspartate-semialdehyde dehydrogenase (345 aa).

NADP(+)-binding positions include T11 to V14 and R39 to S40. R99 is a binding site for phosphate. C130 acts as the Acyl-thioester intermediate in catalysis. Q157 contributes to the substrate binding site. S160 to G161 is an NADP(+) binding site. K227 contributes to the phosphate binding site. Substrate is bound at residue R249. The active-site Proton acceptor is H256. N325 is a binding site for NADP(+).

It belongs to the aspartate-semialdehyde dehydrogenase family. Homodimer.

It carries out the reaction L-aspartate 4-semialdehyde + phosphate + NADP(+) = 4-phospho-L-aspartate + NADPH + H(+). It functions in the pathway amino-acid biosynthesis; L-lysine biosynthesis via DAP pathway; (S)-tetrahydrodipicolinate from L-aspartate: step 2/4. The protein operates within amino-acid biosynthesis; L-methionine biosynthesis via de novo pathway; L-homoserine from L-aspartate: step 2/3. It participates in amino-acid biosynthesis; L-threonine biosynthesis; L-threonine from L-aspartate: step 2/5. Catalyzes the NADPH-dependent formation of L-aspartate-semialdehyde (L-ASA) by the reductive dephosphorylation of L-aspartyl-4-phosphate. The polypeptide is Aspartate-semialdehyde dehydrogenase (Mycobacterium bovis (strain ATCC BAA-935 / AF2122/97)).